The sequence spans 520 residues: Anthranilate synthase component 1 (520 aa).

Residues Ser-40 and 291–293 (PYM) contribute to the L-tryptophan site. 328–329 (GT) is a binding site for chorismate. Mg(2+) is bound at residue Glu-361. Chorismate is bound by residues Tyr-449, Arg-469, 483-485 (GAG), and Gly-485. Glu-498 is a Mg(2+) binding site.

This sequence belongs to the anthranilate synthase component I family. In terms of assembly, heterotetramer consisting of two non-identical subunits: a beta subunit (TrpG) and a large lpha subunit (TrpE). It depends on Mg(2+) as a cofactor.

It catalyses the reaction chorismate + L-glutamine = anthranilate + pyruvate + L-glutamate + H(+). The protein operates within amino-acid biosynthesis; L-tryptophan biosynthesis; L-tryptophan from chorismate: step 1/5. With respect to regulation, cooperatively feedback inhibited by tryptophan. Part of a heterotetrameric complex that catalyzes the two-step biosynthesis of anthranilate, an intermediate in the biosynthesis of L-tryptophan. In the first step, the glutamine-binding beta subunit (TrpG) of anthranilate synthase (AS) provides the glutamine amidotransferase activity which generates ammonia as a substrate that, along with chorismate, is used in the second step, catalyzed by the large alpha subunit of AS (TrpE) to produce anthranilate. In the absence of TrpG, TrpE can synthesize anthranilate directly from chorismate and high concentrations of ammonia. The protein is Anthranilate synthase component 1 (trpE) of Escherichia coli (strain K12).